Here is a 233-residue protein sequence, read N- to C-terminus: NAD(P)H-hydrate epimerase (233 aa).

Residues 10–217 form the YjeF N-terminal domain; sequence AINVDLELFN…ALQRKYELNL (208 aa). Residue 60–64 coordinates (6S)-NADPHX; sequence NNGGD. K(+) is bound by residues N61 and D125. (6S)-NADPHX-binding positions include 129–135 and D158; that span reads GFSFKPP. K(+) is bound at residue S161.

Belongs to the NnrE/AIBP family. K(+) serves as cofactor.

It catalyses the reaction (6R)-NADHX = (6S)-NADHX. The catalysed reaction is (6R)-NADPHX = (6S)-NADPHX. Catalyzes the epimerization of the S- and R-forms of NAD(P)HX, a damaged form of NAD(P)H that is a result of enzymatic or heat-dependent hydration. This is a prerequisite for the S-specific NAD(P)H-hydrate dehydratase to allow the repair of both epimers of NAD(P)HX. This is NAD(P)H-hydrate epimerase from Drosophila grimshawi (Hawaiian fruit fly).